The primary structure comprises 24 residues: Protein YriA (24 aa).

This chain is Protein YriA, found in Escherichia coli (strain K12).